We begin with the raw amino-acid sequence, 161 residues long: ATP synthase subunit b' (161 aa).

Residues 26 to 45 (LPLMAIQFLLLAFVLDKIFY) traverse the membrane as a helical segment.

It belongs to the ATPase B chain family. As to quaternary structure, F-type ATPases have 2 components, F(1) - the catalytic core - and F(0) - the membrane proton channel. F(1) has five subunits: alpha(3), beta(3), gamma(1), delta(1), epsilon(1). F(0) has four main subunits: a(1), b(1), b'(1) and c(10-14). The alpha and beta chains form an alternating ring which encloses part of the gamma chain. F(1) is attached to F(0) by a central stalk formed by the gamma and epsilon chains, while a peripheral stalk is formed by the delta, b and b' chains.

It localises to the cellular thylakoid membrane. In terms of biological role, f(1)F(0) ATP synthase produces ATP from ADP in the presence of a proton or sodium gradient. F-type ATPases consist of two structural domains, F(1) containing the extramembraneous catalytic core and F(0) containing the membrane proton channel, linked together by a central stalk and a peripheral stalk. During catalysis, ATP synthesis in the catalytic domain of F(1) is coupled via a rotary mechanism of the central stalk subunits to proton translocation. Functionally, component of the F(0) channel, it forms part of the peripheral stalk, linking F(1) to F(0). The b'-subunit is a diverged and duplicated form of b found in plants and photosynthetic bacteria. This chain is ATP synthase subunit b', found in Trichodesmium erythraeum (strain IMS101).